Here is a 265-residue protein sequence, read N- to C-terminus: Inositol monophosphatase 2 (265 aa).

Residues glutamate 65, aspartate 86, leucine 88, and aspartate 89 each coordinate Mg(2+). Glutamate 65 serves as a coordination point for substrate. Substrate-binding positions include 88-91 (LDGT), 189-191 (GSC), glutamate 208, and aspartate 216. Aspartate 216 serves as a coordination point for Mg(2+).

This sequence belongs to the inositol monophosphatase superfamily. It depends on Mg(2+) as a cofactor. Low expression in roots, stems, leaves, flowers and young and mature green fruits. Expressed in the stem/leaf junctions, below the shoot apex and on the abaxial side of the petiole of the first expanded leaflets.

It carries out the reaction a myo-inositol phosphate + H2O = myo-inositol + phosphate. The protein operates within polyol metabolism; myo-inositol biosynthesis; myo-inositol from D-glucose 6-phosphate: step 2/2. In terms of biological role, responsible for the provision of inositol required for synthesis of phosphatidylinositol and polyphosphoinositides. This chain is Inositol monophosphatase 2 (IMP2), found in Solanum lycopersicum (Tomato).